We begin with the raw amino-acid sequence, 366 residues long: Flagellar P-ring protein (366 aa).

Residues 1 to 19 form the signal peptide; the sequence is MTLIRLLACLLFLPCLAQA.

Belongs to the FlgI family. As to quaternary structure, the basal body constitutes a major portion of the flagellar organelle and consists of four rings (L,P,S, and M) mounted on a central rod.

Its subcellular location is the periplasm. The protein resides in the bacterial flagellum basal body. Functionally, assembles around the rod to form the L-ring and probably protects the motor/basal body from shearing forces during rotation. This Ruegeria pomeroyi (strain ATCC 700808 / DSM 15171 / DSS-3) (Silicibacter pomeroyi) protein is Flagellar P-ring protein.